Reading from the N-terminus, the 271-residue chain is MNSSQISLKMKHGRVNMQKKPSKCSECGRFFTQRSSLTQHQRIHRGEKPYVCSECGSCFRKQSNLTQHLRIHTGEKPYKCNECEKAFQTKAILVQHLRIHTGEKPYKCNECGKAFCQSPSLIKHQRIHTGEKPYKCAECGKAFSQSVCLTRHQRSHSGDKPFKCNECGKAFNQSACLMQHQRIHSGEKPYTCTECGKAFTQNSSLVEHERTHTGEKLYKCSECEKTFRKQAHLSEHYRIHTGEKPYECFGCGKSFRHSSALLRHQRLHAGE.

C2H2-type zinc fingers lie at residues Ser-22–His-44, Tyr-50–His-72, Tyr-78–His-100, Tyr-106–His-128, Tyr-134–His-156, Phe-162–His-184, Tyr-190–His-212, Tyr-218–His-240, and Tyr-246–His-268.

Belongs to the krueppel C2H2-type zinc-finger protein family.

It localises to the nucleus. Its subcellular location is the nucleolus. May be involved in transcriptional regulation. Essential for Golgi structural integrity. In Pongo abelii (Sumatran orangutan), this protein is Zinc finger protein 501 (ZNF501).